A 418-amino-acid polypeptide reads, in one-letter code: Deoxyribonuclease Tat-D (418 aa).

Residues E185, H226, H277, and D327 each coordinate a divalent metal cation.

It belongs to the metallo-dependent hydrolases superfamily. TatD-type hydrolase family. Mg(2+) serves as cofactor.

The protein localises to the cytoplasm. In terms of biological role, has both endo- and exonuclease activities. Incises double-stranded DNA without obvious specificity via its endonuclease activity and excises the DNA from the 3'-to 5'-end by its exonuclease activity. May have a role in apoptosis. This is Deoxyribonuclease Tat-D from Saccharomyces cerevisiae (strain ATCC 204508 / S288c) (Baker's yeast).